An 835-amino-acid chain; its full sequence is Transcription intermediary factor 1-beta (835 aa).

Residues alanine 14 to serine 24 show a composition bias toward low complexity. Residues alanine 14–glycine 57 are disordered. Serine 24, serine 27, and serine 31 each carry phosphoserine. Lysine 36 is covalently cross-linked (Glycyl lysine isopeptide (Lys-Gly) (interchain with G-Cter in SUMO2)). Residues alanine 39–proline 53 show a composition bias toward low complexity. Residue serine 52 is modified to Phosphoserine. The segment at cysteine 67–lysine 123 adopts an RING-type zinc-finger fold. Residue lysine 129 forms a Glycyl lysine isopeptide (Lys-Gly) (interchain with G-Cter in SUMO2) linkage. Serine 140 carries the phosphoserine modification. The segment at aspartate 150–threonine 197 adopts a B box-type 1; atypical zinc-finger fold. 4 residues coordinate Zn(2+): cysteine 155, cysteine 158, cysteine 179, and histidine 183. A Glycyl lysine isopeptide (Lys-Gly) (interchain with G-Cter in SUMO2) cross-link involves residue lysine 201. The B box-type 2 zinc-finger motif lies at glutamate 206–leucine 247. Positions 211, 214, 234, and 239 each coordinate Zn(2+). The interval glutamate 248–leucine 378 is leucine zipper alpha helical coiled-coil region. The interval aspartate 249–leucine 378 is interaction with MAGEC2. Glycyl lysine isopeptide (Lys-Gly) (interchain with G-Cter in SUMO2) cross-links involve residues lysine 256 and lysine 263. Lysine 268 is subject to N6-acetyllysine. Residue lysine 274 forms a Glycyl lysine isopeptide (Lys-Gly) (interchain with G-Cter in SUMO2) linkage. At lysine 306 the chain carries N6-acetyllysine; alternate. Lysine 306 participates in a covalent cross-link: Glycyl lysine isopeptide (Lys-Gly) (interchain with G-Cter in SUMO2); alternate. Lysine 321 participates in a covalent cross-link: Glycyl lysine isopeptide (Lys-Gly) (interchain with G-Cter in SUMO2). Lysine 342 carries the post-translational modification N6-acetyllysine. Lysine 368 is covalently cross-linked (Glycyl lysine isopeptide (Lys-Gly) (interchain with G-Cter in SUMO2)). Positions lysine 368–phenylalanine 372 are involved in binding PPP1CA. Lysine 379 bears the N6-acetyllysine; alternate mark. A Glycyl lysine isopeptide (Lys-Gly) (interchain with G-Cter in SUMO2); alternate cross-link involves residue lysine 379. Residue lysine 379 forms a Glycyl lysine isopeptide (Lys-Gly) (interchain with G-Cter in SUMO1); alternate linkage. Lysine 409 participates in a covalent cross-link: Glycyl lysine isopeptide (Lys-Gly) (interchain with G-Cter in SUMO2). The tract at residues glutamate 413–glycine 481 is disordered. The residue at position 419 (serine 419) is a Phosphoserine. Lysine 436 participates in a covalent cross-link: Glycyl lysine isopeptide (Lys-Gly) (interchain with G-Cter in SUMO2). Positions lysine 436 to methionine 445 are enriched in polar residues. Serine 439 and serine 441 each carry phosphoserine. A Glycyl lysine isopeptide (Lys-Gly) (interchain with G-Cter in SUMO2); alternate cross-link involves residue lysine 470. Lysine 470 is covalently cross-linked (Glycyl lysine isopeptide (Lys-Gly) (interchain with G-Cter in SUMO1); alternate). Arginine 471 is modified (citrulline). Serine 472 carries the phosphoserine modification. Arginine 473 carries the citrulline modification. 3 positions are modified to phosphoserine: serine 474, serine 480, and serine 490. Residues glycine 477–threonine 514 form an HP1 box region. The PxVxL motif motif lies at leucine 482–aspartate 495. A Phosphothreonine modification is found at threonine 499. Phosphoserine is present on serine 502. Residue lysine 508 forms a Glycyl lysine isopeptide (Lys-Gly) (interchain with G-Cter in SUMO2) linkage. Residue lysine 555 forms a Glycyl lysine isopeptide (Lys-Gly) (interchain with G-Cter in SUMO2); alternate linkage. Lysine 555 participates in a covalent cross-link: Glycyl lysine isopeptide (Lys-Gly) (interchain with G-Cter in SUMO); alternate. A Glycyl lysine isopeptide (Lys-Gly) (interchain with G-Cter in SUMO2) cross-link involves residue lysine 576. Position 595 is a phosphoserine (serine 595). The segment at alanine 626–leucine 673 adopts a PHD-type zinc-finger fold. Lysine 677 is covalently cross-linked (Glycyl lysine isopeptide (Lys-Gly) (interchain with G-Cter in SUMO)). A phosphoserine mark is found at serine 684, serine 690, and serine 698. Residues lysine 696–alanine 800 enclose the Bromo domain. A Glycyl lysine isopeptide (Lys-Gly) (interchain with G-Cter in SUMO2); alternate cross-link involves residue lysine 751. A Glycyl lysine isopeptide (Lys-Gly) (interchain with G-Cter in SUMO1); alternate cross-link involves residue lysine 751. Residue lysine 751 forms a Glycyl lysine isopeptide (Lys-Gly) (interchain with G-Cter in SUMO); alternate linkage. Phosphoserine is present on serine 753. At tyrosine 756 the chain carries Phosphotyrosine. Phosphoserine is present on serine 758. Lysine 771, lysine 775, and lysine 780 each carry N6-acetyllysine; alternate. Residues lysine 771, lysine 775, and lysine 780 each participate in a glycyl lysine isopeptide (Lys-Gly) (interchain with G-Cter in SUMO2); alternate cross-link. Lysine 780 is covalently cross-linked (Glycyl lysine isopeptide (Lys-Gly) (interchain with G-Cter in SUMO1); alternate). Serine 785 is modified (phosphoserine). Lysine 805 participates in a covalent cross-link: Glycyl lysine isopeptide (Lys-Gly) (interchain with G-Cter in SUMO2). Serine 825 is modified (phosphoserine; by ATM and ATR and dsDNA kinase).

Belongs to the TRIM/RBCC family. As to quaternary structure, interacts with ZNF382. Interacts with SETX. Oligomer; the RBCC domain homotrimerizes and interacts with one molecule of KRAB to form the KRAB-KAP1 corepressor complex. Binding to a KRAB domain is an absolute requirement for silencing gene expression. Interacts with CEBPB and NR3C1. Interacts with a number of KRAB-ZFP proteins including ZNF10, ZFP53, ZFP68 and ZNF256. Interacts with NCOR1, NR3C1 and CHD3. Interacts with CEBPB (via the RING-type and PHD-type zinc fingers). Component of a ternary complex that includes TRIM28, a HP1 protein (CBX1, CBX3 OR CBX5), a KRAB domain-containing protein, and DNA. Interacts with CBX5 (via the PxVxL motif); the interaction occurs in interphase nuclei and competes for binding POGZ. Interacts with POGZ; the interaction competes for interaction with CBX5. Interacts with SETDB1; the interaction is enhanced by KAP1 sumoylation, stimulates SETDB1 histone methyltransferase activity and gene silencing. Interacts (via the PHD-type zinc finger) with UBE2I; the interaction is required for sumoylation and repressor activity. Component of the TRIM28/KAP1-ERBB4-MDM2 complex involved in connecting growth factor and DNA damage responses. Interacts directly with ERBB4; the interaction represses ERBB4-mediated transcription activity. Interacts with MDM2; the interaction contributes to p53/TP53 inactivation. Component of the TRIM28/KAP1-MDM2-p53/TP53; involved in regulating p53/TP53 stabilization and activity. Interacts (via the leucine zipper alpha helical coiled-coil) with E2F1 (central region); the interaction inhibits E2F1 acetylation and transcriptional activity. Interacts with PPP1CA; the interaction dephosphorylates TRIM28 at Ser-824 and forms a complex at the p21 promoter site. Interacts with PPP1CB; the interaction is weak but is increased on dephosphorylation at Ser-824. Interacts with SMARCAD1. Interacts with, and sumoylates IRF7. Interacts with MAGEC2. Part of a complex composed of TRIM28, HDAC1, HDAC2 and EHMT2. Interacts with AICDA. The large PER complex involved in the histone methylation is composed of at least PER2, CBX3, TRIM28, SUV39H1 and/or SUV39H2; CBX3 mediates the formation of the complex. Interacts with NR4A3; the interactions potentiates NR4A3 activity on NurRE promoter. Interacts (unphosphorylated or phosphorylated form) with ZBTB1 (via BTB domain). Probably part of a corepressor complex containing ZNF304, TRIM28, SETDB1 and DNMT1. Interacts with ATRX. Forms a complex with ATRX, SETDB1 and ZNF274. Interacts with ZFP568; the interaction mediates ZFP568 transcriptional repression activity. Interacts with RRP1B. Interacts with CRY1. Interacts with ZNF263; recruited to the SIX3 promoter along with other proteins involved in chromatin modification and transcriptional corepression where it contributes to transcriptional repression. Interacts with CYREN (via XLF motif). Interacts with TRIM17; this interaction prevents TRIM28 activity. Interacts with ZNF746. Interacts with PHF13. Interacts with ZNF354C. Interacts with ZNF432; the interaction is independent of PARP1. In terms of processing, ATM-induced phosphorylation on Ser-825 represses sumoylation leading to the de-repression of expression of a subset of genes involved in cell cycle control and apoptosis in response to genotoxic stress. Dephosphorylation by the phosphatases, PPP1CA and PP1CB forms, allows sumoylation and expression of TRIM28 target genes. Post-translationally, sumoylation/desumoylation events regulate TRIM28-mediated transcriptional repression. Sumoylation is required for interaction with CHD3 and SETDB1 and the corepressor activity. Represses and is repressed by Ser-824 phosphorylation. Enhances the TRIM28 corepressor activity, inhibiting transcriptional activity of a number of genes including GADD45A and CDKN1A/p21. Lys-555, Lys-780 and Lys-805 are the major sites of sumoylation. In response to Dox-induced DNA damage, enhanced phosphorylation on Ser-825 prevents sumoylation and allows de-repression of CDKN1A/p21. Auto-ubiquitinated; enhanced by MAGEA2 and MAGEC2. In terms of processing, citrullinated by PADI4. Post-translationally, ADP-ribosylated by SIRT6, promoting TRIM28/KAP1 interaction with CBX5, thereby contributing to the packaging of LINE-1 retrotransposon elements into transcriptionally repressive heterochromatin.

Its subcellular location is the nucleus. The enzyme catalyses S-ubiquitinyl-[E2 ubiquitin-conjugating enzyme]-L-cysteine + [acceptor protein]-L-lysine = [E2 ubiquitin-conjugating enzyme]-L-cysteine + N(6)-ubiquitinyl-[acceptor protein]-L-lysine.. It participates in protein modification; protein sumoylation. In terms of biological role, nuclear corepressor for KRAB domain-containing zinc finger proteins (KRAB-ZFPs). Mediates gene silencing by recruiting CHD3, a subunit of the nucleosome remodeling and deacetylation (NuRD) complex, and SETDB1 (which specifically methylates histone H3 at 'Lys-9' (H3K9me)) to the promoter regions of KRAB target genes. Enhances transcriptional repression by coordinating the increase in H3K9me, the decrease in histone H3 'Lys-9 and 'Lys-14' acetylation (H3K9ac and H3K14ac, respectively) and the disposition of HP1 proteins to silence gene expression. Recruitment of SETDB1 induces heterochromatinization. May play a role as a coactivator for CEBPB and NR3C1 in the transcriptional activation of ORM1. Also a corepressor for ERBB4. Inhibits E2F1 activity by stimulating E2F1-HDAC1 complex formation and inhibiting E2F1 acetylation. May serve as a partial backup to prevent E2F1-mediated apoptosis in the absence of RB1. Important regulator of CDKN1A/p21(CIP1). Has E3 SUMO-protein ligase activity toward itself via its PHD-type zinc finger. Also specifically sumoylates IRF7, thereby inhibiting its transactivation activity. Ubiquitinates p53/TP53 leading to its proteasomal degradation; the function is enhanced by MAGEC2 and MAGEA2, and possibly MAGEA3 and MAGEA6. Mediates the nuclear localization of KOX1, ZNF268 and ZNF300 transcription factors. In association with isoform 2 of ZFP90, is required for the transcriptional repressor activity of FOXP3 and the suppressive function of regulatory T-cells (Treg). Probably forms a corepressor complex required for activated KRAS-mediated promoter hypermethylation and transcriptional silencing of tumor suppressor genes (TSGs) or other tumor-related genes in colorectal cancer (CRC) cells. Required to maintain a transcriptionally repressive state of genes in undifferentiated embryonic stem cells (ESCs). In ESCs, in collaboration with SETDB1, is also required for H3K9me3 and silencing of endogenous and introduced retroviruses in a DNA-methylation independent-pathway. Associates at promoter regions of tumor suppressor genes (TSGs) leading to their gene silencing. The SETDB1-TRIM28-ZNF274 complex may play a role in recruiting ATRX to the 3'-exons of zinc finger genes with atypical chromatin signatures to establish or maintain/protect H3K9me3 at these transcriptionally active regions. This chain is Transcription intermediary factor 1-beta, found in Rattus norvegicus (Rat).